We begin with the raw amino-acid sequence, 400 residues long: Nicotinate phosphoribosyltransferase (400 aa).

His220 is modified (phosphohistidine; by autocatalysis).

It belongs to the NAPRTase family. Transiently phosphorylated on a His residue during the reaction cycle. Phosphorylation strongly increases the affinity for substrates and increases the rate of nicotinate D-ribonucleotide production. Dephosphorylation regenerates the low-affinity form of the enzyme, leading to product release.

It catalyses the reaction nicotinate + 5-phospho-alpha-D-ribose 1-diphosphate + ATP + H2O = nicotinate beta-D-ribonucleotide + ADP + phosphate + diphosphate. The protein operates within cofactor biosynthesis; NAD(+) biosynthesis; nicotinate D-ribonucleotide from nicotinate: step 1/1. In terms of biological role, catalyzes the synthesis of beta-nicotinate D-ribonucleotide from nicotinate and 5-phospho-D-ribose 1-phosphate at the expense of ATP. The protein is Nicotinate phosphoribosyltransferase of Salmonella heidelberg (strain SL476).